A 228-amino-acid chain; its full sequence is Protein-L-isoaspartate O-methyltransferase (228 aa).

S74 is a catalytic residue.

Belongs to the methyltransferase superfamily. L-isoaspartyl/D-aspartyl protein methyltransferase family.

The protein localises to the cytoplasm. It catalyses the reaction [protein]-L-isoaspartate + S-adenosyl-L-methionine = [protein]-L-isoaspartate alpha-methyl ester + S-adenosyl-L-homocysteine. Its function is as follows. Catalyzes the methyl esterification of L-isoaspartyl residues in peptides and proteins that result from spontaneous decomposition of normal L-aspartyl and L-asparaginyl residues. It plays a role in the repair and/or degradation of damaged proteins. This is Protein-L-isoaspartate O-methyltransferase from Methylorubrum extorquens (strain PA1) (Methylobacterium extorquens).